The chain runs to 126 residues: Protein translocase subunit SecE (126 aa).

The next 3 membrane-spanning stretches (helical) occupy residues 18-38 (LKWV…YLYG), 40-60 (LSVV…LGVA), and 97-117 (IVLA…GIMV).

The protein belongs to the SecE/SEC61-gamma family. As to quaternary structure, component of the Sec protein translocase complex. Heterotrimer consisting of SecY, SecE and SecG subunits. The heterotrimers can form oligomers, although 1 heterotrimer is thought to be able to translocate proteins. Interacts with the ribosome. Interacts with SecDF, and other proteins may be involved. Interacts with SecA.

The protein localises to the cell inner membrane. Functionally, essential subunit of the Sec protein translocation channel SecYEG. Clamps together the 2 halves of SecY. May contact the channel plug during translocation. This chain is Protein translocase subunit SecE, found in Vibrio cholerae serotype O1 (strain ATCC 39315 / El Tor Inaba N16961).